Consider the following 363-residue polypeptide: Flagellar P-ring protein (363 aa).

A signal peptide spans 1–20; the sequence is MKLKLFLLSVLLLVSGSSQA.

Belongs to the FlgI family. In terms of assembly, the basal body constitutes a major portion of the flagellar organelle and consists of four rings (L,P,S, and M) mounted on a central rod.

It localises to the periplasm. The protein localises to the bacterial flagellum basal body. Assembles around the rod to form the L-ring and probably protects the motor/basal body from shearing forces during rotation. This chain is Flagellar P-ring protein, found in Shewanella woodyi (strain ATCC 51908 / MS32).